Reading from the N-terminus, the 253-residue chain is Ciliary microtubule associated protein 1B (253 aa).

Residues 182–207 (PGPCAYQVVSPGVYKSRAPQFTILAR) form an STPGR repeat.

This sequence belongs to the CIMAP family.

It is found in the cell projection. The protein resides in the cilium. The protein localises to the flagellum. In Homo sapiens (Human), this protein is Ciliary microtubule associated protein 1B.